A 259-amino-acid polypeptide reads, in one-letter code: 5'-nucleotidase SurE (259 aa).

4 residues coordinate a divalent metal cation: D11, D12, S42, and N99.

This sequence belongs to the SurE nucleotidase family. A divalent metal cation serves as cofactor.

It is found in the cytoplasm. The enzyme catalyses a ribonucleoside 5'-phosphate + H2O = a ribonucleoside + phosphate. Its function is as follows. Nucleotidase that shows phosphatase activity on nucleoside 5'-monophosphates. This is 5'-nucleotidase SurE from Cytophaga hutchinsonii (strain ATCC 33406 / DSM 1761 / CIP 103989 / NBRC 15051 / NCIMB 9469 / D465).